Reading from the N-terminus, the 217-residue chain is uncharacterized protein (217 aa).

Residues 1–32 (MPITKATPLFLRYRLKGFVFLTLLLVQGVFTA) form the signal peptide. Cys-33 carries the N-palmitoyl cysteine lipid modification. A lipid anchor (S-diacylglycerol cysteine) is attached at Cys-33.

This sequence belongs to the MG067/MG068/MG395 family.

It localises to the cell membrane. This is an uncharacterized protein from Mycoplasma pneumoniae (strain ATCC 29342 / M129 / Subtype 1) (Mycoplasmoides pneumoniae).